Reading from the N-terminus, the 106-residue chain is MNKILKGDEVIVLTGRDKKRRGVVLARVDADHVLVEGVNVVKKHQKANPMANNPGGIVEKTLPIHISNVALFNPATGKADRVGFKEEDGRKVRVFRSNGAAVGAKA.

Belongs to the universal ribosomal protein uL24 family. Part of the 50S ribosomal subunit.

Functionally, one of two assembly initiator proteins, it binds directly to the 5'-end of the 23S rRNA, where it nucleates assembly of the 50S subunit. One of the proteins that surrounds the polypeptide exit tunnel on the outside of the subunit. This Bordetella avium (strain 197N) protein is Large ribosomal subunit protein uL24.